We begin with the raw amino-acid sequence, 301 residues long: Ribonuclease Z (301 aa).

Residues histidine 61, histidine 63, aspartate 65, histidine 66, histidine 140, aspartate 211, and histidine 269 each coordinate Zn(2+). Aspartate 65 serves as the catalytic Proton acceptor.

It belongs to the RNase Z family. Homodimer. The cofactor is Zn(2+).

It catalyses the reaction Endonucleolytic cleavage of RNA, removing extra 3' nucleotides from tRNA precursor, generating 3' termini of tRNAs. A 3'-hydroxy group is left at the tRNA terminus and a 5'-phosphoryl group is left at the trailer molecule.. Its function is as follows. Zinc phosphodiesterase, which displays some tRNA 3'-processing endonuclease activity. Probably involved in tRNA maturation, by removing a 3'-trailer from precursor tRNA. The polypeptide is Ribonuclease Z (Bradyrhizobium sp. (strain ORS 278)).